A 581-amino-acid polypeptide reads, in one-letter code: Proteasome-associated ATPase (581 aa).

The segment at methionine 1–aspartate 28 is disordered. Over residues methionine 14–serine 24 the composition is skewed to polar residues. A coiled-coil region spans residues glutamate 27 to lysine 66. Glycine 248–leucine 253 lines the ATP pocket. Residues glycine 561 to leucine 581 are disordered. A compositionally biased stretch (polar residues) spans glutamate 572–leucine 581. The segment at tyrosine 580 to leucine 581 is docks into pockets in the proteasome alpha-ring.

This sequence belongs to the AAA ATPase family. In terms of assembly, homohexamer. Assembles into a hexameric ring structure that caps the 20S proteasome core. Strongly interacts with the prokaryotic ubiquitin-like protein Pup through a hydrophobic interface; the interacting region of ARC lies in its N-terminal coiled-coil domain. There is one Pup binding site per ARC hexamer ring. Upon ATP-binding, the C-terminus of ARC interacts with the alpha-rings of the proteasome core, possibly by binding to the intersubunit pockets.

It functions in the pathway protein degradation; proteasomal Pup-dependent pathway. ATPase which is responsible for recognizing, binding, unfolding and translocation of pupylated proteins into the bacterial 20S proteasome core particle. May be essential for opening the gate of the 20S proteasome via an interaction with its C-terminus, thereby allowing substrate entry and access to the site of proteolysis. Thus, the C-termini of the proteasomal ATPase may function like a 'key in a lock' to induce gate opening and therefore regulate proteolysis. This chain is Proteasome-associated ATPase, found in Sanguibacter keddieii (strain ATCC 51767 / DSM 10542 / NCFB 3025 / ST-74).